A 396-amino-acid chain; its full sequence is MTNIRITEVFTQAMPVLEKLEEAGFEAYFVGGCVRDLLLERPIHDVDIATSAYPEEVKETFAKSIDTGIQHGTVTVLYGGSSYEITTFRTESGYQDFRRPDKVTFVQNLDEDLKRRDFTINALAMNRQGEIIDLFDGLGDLKRRVIKAVGVAEDRFHEDALRMMRAVRFMSQLSFSLEEKTRQAIINNHELLSKISVERIREEFVKLALGKDSRQAFKDFLATGLSEECPGLAGKKDQLSVLTDLKAGPDDEAVFWSLIAVLINLPADKISPFMRAWKNSNAMNQQVRQIVAAFDLLSRGEESDFDLFEIGQENLEAALKLAGLLGKPLSSQVLLDRYNRLPIKAAGELAIDGQWLIKEGIKPSPELGQLLRKALEGVVSGQVENSQAAIAEFLAI.

Residues Gly32 and Arg35 each contribute to the ATP site. 2 residues coordinate CTP: Gly32 and Arg35. Asp45 and Asp47 together coordinate Mg(2+). ATP is bound by residues Arg116, Asp159, Arg162, Arg165, and Arg168. CTP contacts are provided by Arg116, Asp159, Arg162, Arg165, and Arg168.

It belongs to the tRNA nucleotidyltransferase/poly(A) polymerase family. Bacterial CCA-adding enzyme type 3 subfamily. Homodimer. Mg(2+) is required as a cofactor.

It catalyses the reaction a tRNA precursor + 2 CTP + ATP = a tRNA with a 3' CCA end + 3 diphosphate. It carries out the reaction a tRNA with a 3' CCA end + 2 CTP + ATP = a tRNA with a 3' CCACCA end + 3 diphosphate. In terms of biological role, catalyzes the addition and repair of the essential 3'-terminal CCA sequence in tRNAs without using a nucleic acid template. Adds these three nucleotides in the order of C, C, and A to the tRNA nucleotide-73, using CTP and ATP as substrates and producing inorganic pyrophosphate. tRNA 3'-terminal CCA addition is required both for tRNA processing and repair. Also involved in tRNA surveillance by mediating tandem CCA addition to generate a CCACCA at the 3' terminus of unstable tRNAs. While stable tRNAs receive only 3'-terminal CCA, unstable tRNAs are marked with CCACCA and rapidly degraded. The chain is CCA-adding enzyme from Lactobacillus delbrueckii subsp. bulgaricus (strain ATCC 11842 / DSM 20081 / BCRC 10696 / JCM 1002 / NBRC 13953 / NCIMB 11778 / NCTC 12712 / WDCM 00102 / Lb 14).